A 599-amino-acid chain; its full sequence is MLTVIRRIFIIQTFIFITAEKIFHSRDHSDVLNNIHQAELITDTDTAQRFLSKYGFIKAAGSEESQLSESSGDLDFSLSLDLHEGGTTSGSSSSDLQFVSALRDFQRLSDLPVTGVFDDATKAAMNKPRCGVMDDDQELKDVTGSNSTRNHIRTSTNTSHNHEHQAPVRKKRHLSALLKNTSLQKRDVSKWTGHMAFSKSVLKWRLIGEGYSSQLSIQEQKYIFRLAFRMWSEISPLQFIEDLHSPLENIDIRLGFGTGRHLGCSQRFDGAGREFAHAWFLGDIHFDDDEHFTVPNTGSGISLLKVAVHEIGHVLGLPHIYRPGSIMQPSYLPQDAGFEIDWMDRKSIQRLYGVCTGRFSTVFDWIRKEQTPYGEVVVRFNTYFMRDGLYWLYENRNNRTRYGDPVAVQVGWHGLPSGGVDAYVHVWNRKTDAVYFFKGMQYWRYDSENDHVFSHAPDGRLYPRLISEDFPGVSGPLDTAYYDRRDAHIYFFKGSQVFRFDVRMRRLASSSPQEMTEVFPAIVSGDHPVRSLDAAYFSYTHNTVFLLKGSLFWRVLSGKERRRRAFLPMNGLLAHRRVHEQWFDICDVHSSSLRTTRRR.

The first 20 residues, 1–20 (MLTVIRRIFIIQTFIFITAE), serve as a signal peptide directing secretion. Positions 21–170 (KIFHSRDHSD…NHEHQAPVRK (150 aa)) are excised as a propeptide. Cys130 serves as a coordination point for Zn(2+). The tract at residues 141–170 (DVTGSNSTRNHIRTSTNTSHNHEHQAPVRK) is disordered. Positions 143–159 (TGSNSTRNHIRTSTNTS) are enriched in polar residues. His309 lines the Zn(2+) pocket. Glu310 is a catalytic residue. Zn(2+) is bound by residues His313 and His319. Cys355 and Cys586 form a disulfide bridge. 4 Hemopexin repeats span residues 356 to 415 (TGRF…WHGL), 417 to 473 (SGGV…FPGV), 474 to 522 (SGPL…FPAI), and 529 to 585 (VRSL…WFDI). N-linked (GlcNAc...) asparagine glycosylation occurs at Asn398.

The protein belongs to the peptidase M10A family. In terms of processing, the precursor is cleaved by a furin endopeptidase.

Functionally, plays a specialized role in the generation of left-right asymmetry during embryogenesis. May act as a negative regulator of the NOTCH-signaling pathway. The sequence is that of Matrix metallopeptidase-21 from Danio rerio (Zebrafish).